Consider the following 425-residue polypeptide: Enolase (425 aa).

(2R)-2-phosphoglycerate is bound at residue Q163. E205 functions as the Proton donor in the catalytic mechanism. The Mg(2+) site is built by D242, E285, and D312. Positions 337, 366, 367, and 388 each coordinate (2R)-2-phosphoglycerate. K337 acts as the Proton acceptor in catalysis.

Belongs to the enolase family. Mg(2+) is required as a cofactor.

The protein localises to the cytoplasm. It localises to the secreted. Its subcellular location is the cell surface. It carries out the reaction (2R)-2-phosphoglycerate = phosphoenolpyruvate + H2O. It functions in the pathway carbohydrate degradation; glycolysis; pyruvate from D-glyceraldehyde 3-phosphate: step 4/5. Functionally, catalyzes the reversible conversion of 2-phosphoglycerate (2-PG) into phosphoenolpyruvate (PEP). It is essential for the degradation of carbohydrates via glycolysis. This chain is Enolase, found in Cereibacter sphaeroides (strain ATCC 17025 / ATH 2.4.3) (Rhodobacter sphaeroides).